A 191-amino-acid chain; its full sequence is Glycerol-3-phosphate acyltransferase (191 aa).

5 consecutive transmembrane segments (helical) span residues 5-25 (IILI…IAKI), 51-71 (LAVL…YTAQ), 78-98 (DLYI…PIWL), 114-134 (IALN…VFFI), and 153-173 (SFFF…LIFL).

It belongs to the PlsY family. In terms of assembly, probably interacts with PlsX.

The protein localises to the cell membrane. The catalysed reaction is an acyl phosphate + sn-glycerol 3-phosphate = a 1-acyl-sn-glycero-3-phosphate + phosphate. It participates in lipid metabolism; phospholipid metabolism. In terms of biological role, catalyzes the transfer of an acyl group from acyl-phosphate (acyl-PO(4)) to glycerol-3-phosphate (G3P) to form lysophosphatidic acid (LPA). This enzyme utilizes acyl-phosphate as fatty acyl donor, but not acyl-CoA or acyl-ACP. The chain is Glycerol-3-phosphate acyltransferase from Wolbachia pipientis subsp. Culex pipiens (strain wPip).